We begin with the raw amino-acid sequence, 86 residues long: Kappa-theraphotoxin-Cg1a 1 (86 aa).

The signal sequence occupies residues 1-21 (MKVSVLITLAVLGVMFVWASA). A propeptide spanning residues 22-50 (AELEERGSDQRDSPAWLKSMERIFQSGER) is cleaved from the precursor. Cystine bridges form between C52/C66, C59/C71, and C65/C78. The involved in active face stretch occupies residues 55 to 56 (MF). Residue F84 is modified to Phenylalanine amide.

It belongs to the neurotoxin 10 (Hwtx-1) family. 28 (Jztx-11) subfamily. As to expression, expressed by the venom gland.

It is found in the secreted. Functionally, this toxin acts as a voltage-dependent gating-modifier. It inhibits the sodium conductance (IC(50)=124 nM) and slows the fast inactivation (EC(50)=1180 nM) of Nav1.5/SCN5A. It significantly shifts the activation to more depolarized voltages and decreases the deactivation of Nav1.5 currents upon extreme depolarization, but only slightly affects voltage-dependence of steady-state inactivation. In addition, this toxin causes an approximately five-fold decrease in the rate of recovery from inactivation and an approximately 1.9-fold reduction in the closed-state inactivation rate. This toxin integrates the functions of site 3 toxins (alpha-scorpion toxins) with site 4 toxins (beta-scorpion and spider toxins) by targeting multiple sites on Nav1.5. Also shows inhibition of voltage-gated potassium channels (5 uM completely inhibits Kv2.1/KCNB1, whereas 5 uM moderately inhibits Kv4.2/KCND2 Kv4.1/KCND1 channels). The protein is Kappa-theraphotoxin-Cg1a 1 of Chilobrachys guangxiensis (Chinese earth tiger tarantula).